The following is a 213-amino-acid chain: Large ribosomal subunit protein uL1 (213 aa).

This sequence belongs to the universal ribosomal protein uL1 family. As to quaternary structure, part of the 50S ribosomal subunit.

Functionally, binds directly to 23S rRNA. Probably involved in E site tRNA release. Its function is as follows. Protein L1 is also a translational repressor protein, it controls the translation of its operon by binding to its mRNA. This chain is Large ribosomal subunit protein uL1, found in Methanococcus maripaludis (strain DSM 14266 / JCM 13030 / NBRC 101832 / S2 / LL).